The sequence spans 311 residues: Probable dihydroorotate dehydrogenase A (fumarate) (311 aa).

Substrate is bound by residues Lys-45, 69–73 (NSMGL), and Asn-128. 45 to 46 (KT) serves as a coordination point for FMN. Position 128 (Asn-128) interacts with FMN. Cys-131 (nucleophile) is an active-site residue. Residues Lys-165 and Val-193 each contribute to the FMN site. 194 to 195 (NS) is a binding site for substrate. FMN contacts are provided by residues Gly-220, 248-249 (GG), and 270-271 (GT).

The protein belongs to the dihydroorotate dehydrogenase family. Type 1 subfamily. In terms of assembly, homodimer. FMN is required as a cofactor.

Its subcellular location is the cytoplasm. It carries out the reaction (S)-dihydroorotate + fumarate = orotate + succinate. It participates in pyrimidine metabolism; UMP biosynthesis via de novo pathway. Its function is as follows. Catalyzes the conversion of dihydroorotate to orotate with fumarate as the electron acceptor. The sequence is that of Probable dihydroorotate dehydrogenase A (fumarate) (pyrDA) from Streptococcus pneumoniae (strain ATCC BAA-255 / R6).